Reading from the N-terminus, the 192-residue chain is Ion-translocating oxidoreductase complex subunit B (192 aa).

Positions 1-26 (MNTIWIAVGALALLGLVFGAILGYAS) are hydrophobic. Residues 32–91 (EDDPVVEKIDAILPQSQCGQCGYPGCRPYAEAVGLQGEKINRCAPGGEAVMLKIAELLNV) form the 4Fe-4S domain. [4Fe-4S] cluster is bound by residues Cys-49, Cys-52, Cys-57, Cys-74, Cys-117, Cys-120, Cys-123, Cys-127, Cys-147, Cys-150, Cys-153, and Cys-157. 2 4Fe-4S ferredoxin-type domains span residues 108-137 (MLAV…GATR) and 138-167 (AMHT…LRPV).

The protein belongs to the 4Fe4S bacterial-type ferredoxin family. RnfB subfamily. The complex is composed of six subunits: RsxA, RsxB, RsxC, RsxD, RsxE and RsxG. [4Fe-4S] cluster is required as a cofactor.

It is found in the cell inner membrane. Its function is as follows. Part of a membrane-bound complex that couples electron transfer with translocation of ions across the membrane. Required to maintain the reduced state of SoxR. The protein is Ion-translocating oxidoreductase complex subunit B of Salmonella newport (strain SL254).